The following is a 216-amino-acid chain: Adenylate kinase (216 aa).

10-15 (GAGKGT) is an ATP binding site. The interval 30–59 (STGDIFRANIKEKTPLGIEAKRYMDNGQLV) is NMP. Residues T31, R36, 57–59 (QLV), 85–88 (GFPR), and Q92 each bind AMP. Residues 126–163 (GRRVCTSCGASYHIRFNPPKIEGKCDICDNELIQRKDD) are LID. R127 lines the ATP pocket. The Zn(2+) site is built by C130 and C133. Position 136–137 (136–137 (SY)) interacts with ATP. The Zn(2+) site is built by C150 and C153. AMP is bound by residues R160 and R171. E199 is an ATP binding site.

This sequence belongs to the adenylate kinase family. As to quaternary structure, monomer.

The protein resides in the cytoplasm. It catalyses the reaction AMP + ATP = 2 ADP. Its pathway is purine metabolism; AMP biosynthesis via salvage pathway; AMP from ADP: step 1/1. Catalyzes the reversible transfer of the terminal phosphate group between ATP and AMP. Plays an important role in cellular energy homeostasis and in adenine nucleotide metabolism. The protein is Adenylate kinase of Clostridium botulinum (strain Loch Maree / Type A3).